We begin with the raw amino-acid sequence, 303 residues long: Glutathione transport system permease protein GsiD (303 aa).

Helical transmembrane passes span 40 to 60 (AMTA…ARWI), 105 to 125 (LAAG…LGLL), 144 to 164 (LFAF…GSGI), 165 to 185 (ANVI…LVRG), 222 to 242 (IVVF…SLSF), and 266 to 286 (VIAP…VLAF). The region spanning 101 to 290 (AQISLAAGVF…LTVLAFNLLG (190 aa)) is the ABC transmembrane type-1 domain.

It belongs to the binding-protein-dependent transport system permease family. As to quaternary structure, the complex is composed of two ATP-binding proteins (GsiA), two transmembrane proteins (GsiC and GsiD) and a solute-binding protein (GsiB).

Its subcellular location is the cell inner membrane. In terms of biological role, part of the ABC transporter complex GsiABCD involved in glutathione import. Probably responsible for the translocation of the substrate across the membrane. In Escherichia coli O157:H7, this protein is Glutathione transport system permease protein GsiD.